Here is a 634-residue protein sequence, read N- to C-terminus: Sodium-dependent multivitamin transporter (634 aa).

12 helical membrane passes run 23–43 (FSVVDYVVFGLLLVLSLVIGL), 65–85 (MGCLPVALSLLATFQSAVAIL), 100–120 (FLGCSYFLGLLIPAHIFIPVF), 142–162 (ICGTVTFIFQMVVYMGVALYA), 175–195 (LWLSVLALGIVCNIYTALGGL), 207–227 (LIMFLGQLVVIIVGAAKVGGL), 255–275 (FWTLAFGGVFMMLSLYGVNQA), 295–315 (AVFPCQQVALCMSCLIGLVMF), 350–370 (LPGLFVACLFSGSLSTISSAF), 403–423 (FAYGLVCLGMAYVSSHLGSVL), 427–447 (LSIFGMVGGPLLGLFCLGMFF), and 455–475 (AIVGLLTGLTMAFWIGIGSIV). Residues Asn488 and Asn497 are each glycosylated (N-linked (GlcNAc...) asparagine). The helical transmembrane segment at 526–546 (LWYSAHNSTTVIAVGLIVSLL) threads the bilayer.

The protein belongs to the sodium:solute symporter (SSF) (TC 2.A.21) family. As to quaternary structure, interacts with PDZD11. Expressed in the jejunum (at protein level). Expressed in lung, skeletal muscle, heart, brain, kidney, intestine, liver, and placenta.

It is found in the cell membrane. The protein localises to the apical cell membrane. It carries out the reaction biotin(out) + 2 Na(+)(out) = biotin(in) + 2 Na(+)(in). It catalyses the reaction (R)-pantothenate(out) + 2 Na(+)(out) = (R)-pantothenate(in) + 2 Na(+)(in). The enzyme catalyses (R)-lipoate(out) + 2 Na(+)(out) = (R)-lipoate(in) + 2 Na(+)(in). The catalysed reaction is iodide(out) + 2 Na(+)(out) = iodide(in) + 2 Na(+)(in). Sodium-dependent multivitamin transporter that mediates the electrogenic transport of pantothenate, biotin, lipoate and iodide. Functions as a Na(+)-coupled substrate symporter where the stoichiometry of Na(+):substrate is 2:1, creating an electrochemical Na(+) gradient used as driving force for substrate uptake. Required for biotin and pantothenate uptake in the intestine across the brush border membrane. Plays a role in the maintenance of intestinal mucosa integrity, by providing the gut mucosa with biotin. Contributes to the luminal uptake of biotin and pantothenate into the brain across the blood-brain barrier. The sequence is that of Sodium-dependent multivitamin transporter from Rattus norvegicus (Rat).